A 361-amino-acid chain; its full sequence is Probable pectinesterase 49 (361 aa).

Residues 1–22 (MGYISLALVALLVFFASPVVLA) form the signal peptide. Asn128 is a glycosylation site (N-linked (GlcNAc...) asparagine). Gln174 is a binding site for substrate. Asp197 serves as the catalytic Proton donor. Residue Asp218 is the Nucleophile of the active site. Substrate is bound by residues Arg275 and Trp277.

It belongs to the pectinesterase family. As to expression, expressed in flower buds.

It localises to the secreted. The protein localises to the cell wall. The catalysed reaction is [(1-&gt;4)-alpha-D-galacturonosyl methyl ester](n) + n H2O = [(1-&gt;4)-alpha-D-galacturonosyl](n) + n methanol + n H(+). The protein operates within glycan metabolism; pectin degradation; 2-dehydro-3-deoxy-D-gluconate from pectin: step 1/5. Its function is as follows. Acts in the modification of cell walls via demethylesterification of cell wall pectin. This is Probable pectinesterase 49 (PME49) from Arabidopsis thaliana (Mouse-ear cress).